Reading from the N-terminus, the 56-residue chain is uncharacterized protein (56 aa).

2 helical membrane passes run valine 6–glycine 26 and valine 29–valine 49.

The protein resides in the cell membrane. This is an uncharacterized protein from Bacillus subtilis (strain 168).